A 330-amino-acid polypeptide reads, in one-letter code: Ornithine carbamoyltransferase (330 aa).

Carbamoyl phosphate is bound by residues S57–T60, Q84, R108, and H135–Q138. L-ornithine is bound by residues N168, D232, and S236–M237. Residues C273 to L274 and R318 contribute to the carbamoyl phosphate site.

This sequence belongs to the aspartate/ornithine carbamoyltransferase superfamily. OTCase family.

It localises to the cytoplasm. It catalyses the reaction carbamoyl phosphate + L-ornithine = L-citrulline + phosphate + H(+). Its pathway is amino-acid biosynthesis; L-arginine biosynthesis; L-arginine from L-ornithine and carbamoyl phosphate: step 1/3. Functionally, reversibly catalyzes the transfer of the carbamoyl group from carbamoyl phosphate (CP) to the N(epsilon) atom of ornithine (ORN) to produce L-citrulline. In Alkaliphilus metalliredigens (strain QYMF), this protein is Ornithine carbamoyltransferase.